The sequence spans 376 residues: MKIVVDENMPYVEPLFGALGEIIPVNGRTLTPEQVQDADVLLVRSVTRVNAALLDANSKLKFVGSATIGTDHVDLAYLAGRGIPFSNAPGCNATAVGEFAFIAMLELAARFNSPLKGKVVGIVGAGNTGSATAKCLEAYGIKVLLNDPIKAAEGDPRHFVSLETLLHEADIISLHVPITRTGEHKTLHLFDEARMMSLKPNTWLLNCCRGDVIDNQALIKVKEQRDDLKLVLDVWEGEPNPMPELVPFAEFATPHIAGYSLEGKARGTFMLYQKLCELLAIPATKRLSELLPPFHFKAVELEQAPDEKALLQLARFVYDLRDDDAVFRNGFARSNGFDTMRKNHKHRREFSALALAYHGQSEVDWLSNLGFSGVGR.

The substrate site is built by S45 and T67. D147 lines the NAD(+) pocket. The active site involves R209. D233 contributes to the NAD(+) binding site. The active site involves E238. H255 serves as the catalytic Proton donor. G258 contacts NAD(+). Y259 is a substrate binding site.

Belongs to the D-isomer specific 2-hydroxyacid dehydrogenase family. PdxB subfamily. In terms of assembly, homodimer.

Its subcellular location is the cytoplasm. It catalyses the reaction 4-phospho-D-erythronate + NAD(+) = (R)-3-hydroxy-2-oxo-4-phosphooxybutanoate + NADH + H(+). The protein operates within cofactor biosynthesis; pyridoxine 5'-phosphate biosynthesis; pyridoxine 5'-phosphate from D-erythrose 4-phosphate: step 2/5. Catalyzes the oxidation of erythronate-4-phosphate to 3-hydroxy-2-oxo-4-phosphonooxybutanoate. The chain is Erythronate-4-phosphate dehydrogenase from Shewanella sp. (strain ANA-3).